An 835-amino-acid chain; its full sequence is Protein translocase subunit SecA (835 aa).

ATP-binding positions include Q85, 103-107 (GEGKT), and D492. The segment at 788-807 (VQGEAVHPSSDGEEAKKKPV) is disordered. The Zn(2+) site is built by C819, C821, C830, and C831.

Belongs to the SecA family. In terms of assembly, monomer and homodimer. Part of the essential Sec protein translocation apparatus which comprises SecA, SecYEG and auxiliary proteins SecDF. Other proteins may also be involved. The cofactor is Zn(2+).

The protein resides in the cell membrane. Its subcellular location is the cytoplasm. The catalysed reaction is ATP + H2O + cellular proteinSide 1 = ADP + phosphate + cellular proteinSide 2.. Functionally, part of the Sec protein translocase complex. Interacts with the SecYEG preprotein conducting channel. Has a central role in coupling the hydrolysis of ATP to the transfer of proteins into and across the cell membrane, serving as an ATP-driven molecular motor driving the stepwise translocation of polypeptide chains across the membrane. This chain is Protein translocase subunit SecA, found in Bacillus cereus (strain B4264).